The chain runs to 410 residues: Peptidase T (410 aa).

Residue His79 participates in Zn(2+) binding. Asp81 is an active-site residue. Asp142 lines the Zn(2+) pocket. Glu176 serves as the catalytic Proton acceptor. 3 residues coordinate Zn(2+): Glu177, Asp199, and His381.

This sequence belongs to the peptidase M20B family. Zn(2+) is required as a cofactor.

Its subcellular location is the cytoplasm. It catalyses the reaction Release of the N-terminal residue from a tripeptide.. In terms of biological role, cleaves the N-terminal amino acid of tripeptides. In Bacillus anthracis (strain A0248), this protein is Peptidase T.